Consider the following 308-residue polypeptide: Ribosomal protein L11 methyltransferase (308 aa).

Thr-157, Gly-178, Asp-200, and Asn-243 together coordinate S-adenosyl-L-methionine.

The protein belongs to the methyltransferase superfamily. PrmA family.

The protein resides in the cytoplasm. The catalysed reaction is L-lysyl-[protein] + 3 S-adenosyl-L-methionine = N(6),N(6),N(6)-trimethyl-L-lysyl-[protein] + 3 S-adenosyl-L-homocysteine + 3 H(+). Its function is as follows. Methylates ribosomal protein L11. The polypeptide is Ribosomal protein L11 methyltransferase (Desulforamulus reducens (strain ATCC BAA-1160 / DSM 100696 / MI-1) (Desulfotomaculum reducens)).